The following is a 692-amino-acid chain: DNA ligase (692 aa).

Residues 35–39, 88–89, and Glu-117 each bind NAD(+); these read DLVYD and SL. Catalysis depends on Lys-119, which acts as the N6-AMP-lysine intermediate. Residues Arg-140, Glu-176, Lys-301, and Lys-325 each coordinate NAD(+). Zn(2+) is bound by residues Cys-416, Cys-419, Cys-434, and Cys-439. One can recognise a BRCT domain in the interval 611–692; sequence LTNQSNSWAS…FDLIKNSKKT (82 aa).

The protein belongs to the NAD-dependent DNA ligase family. LigA subfamily. It depends on Mg(2+) as a cofactor. Mn(2+) serves as cofactor.

It carries out the reaction NAD(+) + (deoxyribonucleotide)n-3'-hydroxyl + 5'-phospho-(deoxyribonucleotide)m = (deoxyribonucleotide)n+m + AMP + beta-nicotinamide D-nucleotide.. Functionally, DNA ligase that catalyzes the formation of phosphodiester linkages between 5'-phosphoryl and 3'-hydroxyl groups in double-stranded DNA using NAD as a coenzyme and as the energy source for the reaction. It is essential for DNA replication and repair of damaged DNA. The sequence is that of DNA ligase from Mesomycoplasma hyopneumoniae (strain 7448) (Mycoplasma hyopneumoniae).